The primary structure comprises 181 residues: Adenine phosphoribosyltransferase 2 (181 aa).

Position 2 is an N-acetylserine (serine 2).

The protein belongs to the purine/pyrimidine phosphoribosyltransferase family.

Its subcellular location is the cytoplasm. The enzyme catalyses AMP + diphosphate = 5-phospho-alpha-D-ribose 1-diphosphate + adenine. It participates in purine metabolism; AMP biosynthesis via salvage pathway; AMP from adenine: step 1/1. Catalyzes a salvage reaction resulting in the formation of AMP, that is energically less costly than de novo synthesis. May lack catalytic activity. The sequence is that of Adenine phosphoribosyltransferase 2 (APT2) from Saccharomyces cerevisiae (strain ATCC 204508 / S288c) (Baker's yeast).